The chain runs to 725 residues: ABC transporter G family member 19 (725 aa).

The 253-residue stretch at 73–325 (LNFNNLQYDV…FSDFGRPIPE (253 aa)) folds into the ABC transporter domain. ATP is bound at residue 117–124 (GASGAGKS). Residues 419 to 629 (FETFILAKRY…PYEAVLINEF (211 aa)) form the ABC transmembrane type-2 domain. 7 helical membrane passes run 438 to 458 (LVGT…TVYW), 473 to 493 (LFAF…PVFI), 515 to 535 (ISHS…FSAI), 537 to 557 (FWTV…LLIY), 577 to 597 (IMLC…LSGF), 606 to 626 (FYWT…AVLI), and 698 to 718 (LWIT…ALLF).

Belongs to the ABC transporter superfamily. ABCG family. Eye pigment precursor importer (TC 3.A.1.204) subfamily.

The protein resides in the vacuole membrane. Functionally, confers selective resistance to kanamycin. The protein is ABC transporter G family member 19 (ABCG19) of Arabidopsis thaliana (Mouse-ear cress).